The chain runs to 949 residues: Zinc finger CCHC domain-containing protein 14 (949 aa).

Disordered regions lie at residues 25–44, 59–92, 200–221, 236–262, 355–457, and 739–779; these read SSLNGGGGHGGKGAPGPGGA, EAPVSSVSNSLENALHTSAHSTEESLPKRPLGKH, STSSPPQQLQSPSPGNPSLSKV, AGIPSSQSGAQHHGQHPAGSAAPLPHC, KEKS…DKEK, and PESS…PQPA. Residues 28-43 show a composition bias toward gly residues; the sequence is NGGGGHGGKGAPGPGG. The segment covering 61 to 78 has biased composition (polar residues); it reads PVSSVSNSLENALHTSAH. Over residues 200 to 219 the composition is skewed to low complexity; the sequence is STSSPPQQLQSPSPGNPSLS. The span at 395–411 shows a compositional bias: basic and acidic residues; that stretch reads HAAELRVEVEQPHHQLP. Residues 416–425 are compositionally biased toward low complexity; sequence SSEYSSSSSS. Over residues 431–457 the composition is skewed to basic and acidic residues; sequence AREESSDSAEENDRRVEIHLESSDKEK. The segment at 906–923 adopts a CCHC-type zinc-finger fold; it reads LSCYNCGATGHRAQDCKQ.

This is Zinc finger CCHC domain-containing protein 14 (ZCCHC14) from Homo sapiens (Human).